Here is a 267-residue protein sequence, read N- to C-terminus: MLTSSGYIQHHLTNAQMCTVDGSIAFNYACADAGFWTWHIDSLLFSVGLGVLFLFVFYKVGQKATTGVPGKLQCAVEMLMEFVSNAVKDSFHGRSPVIAPLALTIFVWILLMNTMDLIPVDFIPEAAKQILGVPYLKVVPTTDMNITFGLSLSVFALIVFYSIKIKGITGFVKELTLQPFNHWAFIPVNFILETIALIAKPISLSLRLFGNLYAGELIFILIALMPWWSQAALSVPWAIFHILVIVLQAFIFMMLTIVYLSMAHEDH.

The next 5 membrane-spanning stretches (helical) occupy residues 38–58 (WHID…FVFY), 98–118 (IAPL…MDLI), 145–165 (NITF…SIKI), 208–228 (LFGN…MPWW), and 238–258 (AIFH…LTIV).

Belongs to the ATPase A chain family. In terms of assembly, F-type ATPases have 2 components, CF(1) - the catalytic core - and CF(0) - the membrane proton channel. CF(1) has five subunits: alpha(3), beta(3), gamma(1), delta(1), epsilon(1). CF(0) has three main subunits: a(1), b(2) and c(9-12). The alpha and beta chains form an alternating ring which encloses part of the gamma chain. CF(1) is attached to CF(0) by a central stalk formed by the gamma and epsilon chains, while a peripheral stalk is formed by the delta and b chains.

The protein resides in the cell inner membrane. Key component of the proton channel; it plays a direct role in the translocation of protons across the membrane. The protein is ATP synthase subunit a of Psychromonas ingrahamii (strain DSM 17664 / CCUG 51855 / 37).